Here is a 224-residue protein sequence, read N- to C-terminus: Thymidine kinase (224 aa).

ATP-binding positions include 19–26 (GPMFAGKT) and 93–96 (DEVQ). The active-site Proton acceptor is Glu-94. Cys-150, Cys-153, Cys-188, and His-191 together coordinate Zn(2+).

Belongs to the thymidine kinase family. As to quaternary structure, homotetramer.

The protein localises to the cytoplasm. It carries out the reaction thymidine + ATP = dTMP + ADP + H(+). In Mycoplasmoides gallisepticum (strain R(low / passage 15 / clone 2)) (Mycoplasma gallisepticum), this protein is Thymidine kinase.